A 320-amino-acid polypeptide reads, in one-letter code: MSKPEDLGDANGDADRGDLSGDLRSVLVTSVLNLEPLDEDLYRGRHYWVPTSQRLFGGQIVGQALVAAAKSVSEDVHVHSLHCYFVRAGDPKVPVLYHVERTRTGASFSVRAVKAVQHGKAIFICQASFQQMQPSPLQHQFSMPTVPPPEELLDHEALIDQYLRDPNLHEKYRVGLNRIAAREVPIEIKLVNPPALNQLQTLEPKQMFWVRARGYIGEGDIKMHCCVAAYISDYAFLGTALLPHQSKYKVNFMVSLDHSMWFHAPFRADHWMLYECESPWAGGSRGLVHGRLWRRDGVLAVTCAQEGVIRSKPRVSESKL.

Active-site charge relay system residues include aspartate 233, serine 255, and glutamine 305. Residues 318-320 (SKL) carry the Microbody targeting signal motif.

The protein belongs to the C/M/P thioester hydrolase family. In terms of assembly, homodimer.

The protein resides in the peroxisome matrix. The catalysed reaction is choloyl-CoA + H2O = cholate + CoA + H(+). It catalyses the reaction chenodeoxycholoyl-CoA + H2O = chenodeoxycholate + CoA + H(+). The enzyme catalyses acetyl-CoA + H2O = acetate + CoA + H(+). It carries out the reaction butanoyl-CoA + H2O = butanoate + CoA + H(+). The catalysed reaction is hexanoyl-CoA + H2O = hexanoate + CoA + H(+). It catalyses the reaction octanoyl-CoA + H2O = octanoate + CoA + H(+). The enzyme catalyses decanoyl-CoA + H2O = decanoate + CoA + H(+). It carries out the reaction dodecanoyl-CoA + H2O = dodecanoate + CoA + H(+). The catalysed reaction is tetradecanoyl-CoA + H2O = tetradecanoate + CoA + H(+). It catalyses the reaction 4,8-dimethylnonanoyl-CoA + H2O = 4,8-dimethylnonanoate + CoA + H(+). The enzyme catalyses 2,6-dimethylheptanoyl-CoA + H2O = 2,6-dimethylheptanoate + CoA + H(+). It carries out the reaction malonyl-CoA + H2O = malonate + CoA + H(+). The catalysed reaction is acetoacetyl-CoA + H2O = acetoacetate + CoA + H(+). It catalyses the reaction propanoyl-CoA + H2O = propanoate + CoA + H(+). The enzyme catalyses succinyl-CoA + H2O = succinate + CoA + H(+). It carries out the reaction glutaryl-CoA + H2O = glutarate + CoA + H(+). The catalysed reaction is hexanedioyl-CoA + H2O = hexanedioate + CoA + H(+). It catalyses the reaction octanedioyl-CoA + H2O = octanedioate + CoA + H(+). The enzyme catalyses decanedioyl-CoA + H2O = decanedioate + CoA + H(+). It carries out the reaction dodecanedioyl-CoA + H2O = dodecanedioate + CoA + H(+). The catalysed reaction is (9Z)-tetradecenoyl-CoA + H2O = (9Z)-tetradecenoate + CoA + H(+). It catalyses the reaction hexadecanoyl-CoA + H2O = hexadecanoate + CoA + H(+). The enzyme catalyses (9Z)-hexadecenoyl-CoA + H2O = (9Z)-hexadecenoate + CoA + H(+). It carries out the reaction octadecanoyl-CoA + H2O = octadecanoate + CoA + H(+). The catalysed reaction is (9Z)-octadecenoyl-CoA + H2O = (9Z)-octadecenoate + CoA + H(+). It catalyses the reaction (9Z,12Z)-octadecadienoyl-CoA + H2O = (9Z,12Z)-octadecadienoate + CoA + H(+). The enzyme catalyses eicosanoyl-CoA + H2O = eicosanoate + CoA + H(+). It carries out the reaction (5Z,8Z,11Z,14Z)-eicosatetraenoyl-CoA + H2O = (5Z,8Z,11Z,14Z)-eicosatetraenoate + CoA + H(+). The catalysed reaction is (3S)-3-hydroxy-3-methylglutaryl-CoA + H2O = 3-hydroxy-3-methylglutarate + CoA + H(+). It catalyses the reaction 3alpha,7alpha,12alpha-trihydroxy-5beta-cholestan-26-oyl-CoA + H2O = 3alpha,7alpha,12alpha-trihydroxy-5beta-cholestan-26-oate + CoA + H(+). The enzyme catalyses 2-methyloctadecanoyl-CoA + H2O = 2-methyloctadecanoate + CoA + H(+). It carries out the reaction prostaglandin F2alpha-CoA + H2O = prostaglandin F2alpha + CoA + H(+). With respect to regulation, inhibited by CoASH (IC(50)=10-15 uM). Also inhibited by cysteine-reactive agents. Catalyzes the hydrolysis of acyl-CoAs into free fatty acids and coenzyme A (CoASH), regulating their respective intracellular levels. Displays no strong substrate specificity with respect to the carboxylic acid moiety of Acyl-CoAs. Hydrolyzes medium length (C2 to C20) straight-chain, saturated and unsaturated acyl-CoAS but is inactive towards substrates with longer aliphatic chains. Moreover, it catalyzes the hydrolysis of CoA esters of bile acids, such as choloyl-CoA and chenodeoxycholoyl-CoA and competes with bile acid CoA:amino acid N-acyltransferase (BAAT). Is also able to hydrolyze CoA esters of dicarboxylic acids. It is involved in the metabolic regulation of peroxisome proliferation. This is Acyl-coenzyme A thioesterase 8 (Acot8) from Rattus norvegicus (Rat).